The sequence spans 101 residues: Small ribosomal subunit protein uS10 (101 aa).

This sequence belongs to the universal ribosomal protein uS10 family. In terms of assembly, part of the 30S ribosomal subunit.

Involved in the binding of tRNA to the ribosomes. The chain is Small ribosomal subunit protein uS10 from Mycobacterium avium (strain 104).